A 375-amino-acid chain; its full sequence is Queuine tRNA-ribosyltransferase (375 aa).

Asp-90 acts as the Proton acceptor in catalysis. Residues Asp-90–Phe-94, Asp-144, Gln-193, and Gly-220 contribute to the substrate site. Residues Gly-251–Asp-257 are RNA binding. Asp-270 serves as the catalytic Nucleophile. The RNA binding; important for wobble base 34 recognition stretch occupies residues Thr-275–Arg-279. Zn(2+) contacts are provided by Cys-308, Cys-310, Cys-313, and His-339.

Belongs to the queuine tRNA-ribosyltransferase family. As to quaternary structure, homodimer. Within each dimer, one monomer is responsible for RNA recognition and catalysis, while the other monomer binds to the replacement base PreQ1. It depends on Zn(2+) as a cofactor.

The catalysed reaction is 7-aminomethyl-7-carbaguanine + guanosine(34) in tRNA = 7-aminomethyl-7-carbaguanosine(34) in tRNA + guanine. Its pathway is tRNA modification; tRNA-queuosine biosynthesis. Catalyzes the base-exchange of a guanine (G) residue with the queuine precursor 7-aminomethyl-7-deazaguanine (PreQ1) at position 34 (anticodon wobble position) in tRNAs with GU(N) anticodons (tRNA-Asp, -Asn, -His and -Tyr). Catalysis occurs through a double-displacement mechanism. The nucleophile active site attacks the C1' of nucleotide 34 to detach the guanine base from the RNA, forming a covalent enzyme-RNA intermediate. The proton acceptor active site deprotonates the incoming PreQ1, allowing a nucleophilic attack on the C1' of the ribose to form the product. After dissociation, two additional enzymatic reactions on the tRNA convert PreQ1 to queuine (Q), resulting in the hypermodified nucleoside queuosine (7-(((4,5-cis-dihydroxy-2-cyclopenten-1-yl)amino)methyl)-7-deazaguanosine). This is Queuine tRNA-ribosyltransferase from Janthinobacterium sp. (strain Marseille) (Minibacterium massiliensis).